The chain runs to 58 residues: Large ribosomal subunit protein bL32 (58 aa).

The protein belongs to the bacterial ribosomal protein bL32 family.

The sequence is that of Large ribosomal subunit protein bL32 from Prochlorococcus marinus (strain MIT 9303).